Reading from the N-terminus, the 850-residue chain is Mitochondrial escape protein 2 (850 aa).

A mitochondrion-targeting transit peptide spans 1–44; it reads MLLVRTTSLNVSRMPVPCLARGIGILKGKYRLANLMNAQPSVRH. The tract at residues 44-66 is disordered; the sequence is HVSSEIQQKDQQAGESNTATDTG. Over 45–287 the chain is Mitochondrial matrix; sequence VSSEIQQKDQ…VSNFFTNHTR (243 aa). Polar residues predominate over residues 47 to 64; the sequence is SEIQQKDQQAGESNTATD. The RRM domain maps to 198 to 272; sequence TTIVIKFQGP…TVLHIQYENI (75 aa). Residues 288 to 308 form a helical membrane-spanning segment; sequence IAIPVLFALLSIFAVLVFDPI. Over 309 to 850 the chain is Mitochondrial intermembrane; it reads REFSIEQKIT…CEEEIKNLSK (542 aa). Over residues 607 to 621 the composition is skewed to basic and acidic residues; that stretch reads KGENVKEPESEKEIA. The tract at residues 607–633 is disordered; it reads KGENVKEPESEKEIAENNDSDSEADTS.

Belongs to the YME2 family.

It localises to the mitochondrion inner membrane. In terms of biological role, plays a role in maintaining the mitochondrial genome and in controlling the mtDNA escape. Involved in the regulation of mtDNA nucleotide structure and number. May have a dispensable role in early maturation of pre-rRNA. The protein is Mitochondrial escape protein 2 (YME2) of Saccharomyces cerevisiae (strain YJM789) (Baker's yeast).